A 323-amino-acid chain; its full sequence is D-alanine--D-alanine ligase (323 aa).

The 200-residue stretch at 120–319 (LSVLKPYGIK…LEDLFTNAIE (200 aa)) folds into the ATP-grasp domain. 148-203 (VKKVGLPCFVKPNKAGSSFGISKVKSEAELPIAIEVAYKEDNEIIIESFLDGTEVS) is an ATP binding site. The Mg(2+) site is built by E274, E286, and N288.

This sequence belongs to the D-alanine--D-alanine ligase family. It depends on Mg(2+) as a cofactor. The cofactor is Mn(2+).

Its subcellular location is the cytoplasm. It carries out the reaction 2 D-alanine + ATP = D-alanyl-D-alanine + ADP + phosphate + H(+). The protein operates within cell wall biogenesis; peptidoglycan biosynthesis. Its function is as follows. Cell wall formation. The protein is D-alanine--D-alanine ligase of Flavobacterium johnsoniae (strain ATCC 17061 / DSM 2064 / JCM 8514 / BCRC 14874 / CCUG 350202 / NBRC 14942 / NCIMB 11054 / UW101) (Cytophaga johnsonae).